A 170-amino-acid chain; its full sequence is NADH-quinone oxidoreductase subunit B (170 aa).

[4Fe-4S] cluster-binding residues include Cys37, Cys38, Cys102, and Cys131.

Belongs to the complex I 20 kDa subunit family. As to quaternary structure, NDH-1 is composed of 14 different subunits. Subunits NuoB, C, D, E, F, and G constitute the peripheral sector of the complex. The cofactor is [4Fe-4S] cluster.

It localises to the cell inner membrane. The catalysed reaction is a quinone + NADH + 5 H(+)(in) = a quinol + NAD(+) + 4 H(+)(out). Functionally, NDH-1 shuttles electrons from NADH, via FMN and iron-sulfur (Fe-S) centers, to quinones in the respiratory chain. The immediate electron acceptor for the enzyme in this species is believed to be ubiquinone. Couples the redox reaction to proton translocation (for every two electrons transferred, four hydrogen ions are translocated across the cytoplasmic membrane), and thus conserves the redox energy in a proton gradient. The protein is NADH-quinone oxidoreductase subunit B of Geobacter metallireducens (strain ATCC 53774 / DSM 7210 / GS-15).